A 257-amino-acid polypeptide reads, in one-letter code: Beta-fibrinogenase mucrofibrase-3 (257 aa).

Residues 1 to 18 form the signal peptide; the sequence is MVLIRVLANLLILQLSYA. The propeptide occupies 19–24; it reads QKSSEL. The region spanning 25–248 is the Peptidase S1 domain; sequence VIGGDECNIN…HLDWIKGIIA (224 aa). 6 cysteine pairs are disulfide-bonded: cysteine 31–cysteine 162, cysteine 49–cysteine 65, cysteine 97–cysteine 255, cysteine 141–cysteine 209, cysteine 173–cysteine 188, and cysteine 199–cysteine 224. Residues histidine 64 and aspartate 109 each act as charge relay system in the active site. Residue serine 203 is the Charge relay system of the active site.

This sequence belongs to the peptidase S1 family. Snake venom subfamily. Monomer. In terms of tissue distribution, expressed by the venom gland.

Its subcellular location is the secreted. In terms of biological role, snake venom serine protease with fibrinogenolytic activities. Cleaves beta-chain of fibrinogen (FGB) efficiently and shows relatively lower activity on alpha-chain. This is Beta-fibrinogenase mucrofibrase-3 from Protobothrops mucrosquamatus (Taiwan habu).